A 776-amino-acid polypeptide reads, in one-letter code: Calcium-independent phospholipase A2-gamma (776 aa).

Residues Asn-4 and Asn-157 are each glycosylated (N-linked (GlcNAc...) asparagine). Disordered stretches follow at residues 216–276 (KGKM…HPVS) and 306–334 (KLKS…DKKA). 2 stretches are compositionally biased toward basic and acidic residues: residues 221-239 (QTKE…ERKS) and 247-263 (VADR…KDKL). Residues 439-634 (LTIDGGGTRG…LLNNPSALAL (196 aa)) form the PNPLA domain. Residues 443–448 (GGGTRG) carry the GXGXXG motif. The helical transmembrane segment at 469 to 489 (LFDYICGVSTGAILAFMLGLF) threads the bilayer. The GXSXG motif lies at 475–479 (GVSTG). Residue Ser-477 is the Nucleophile of the active site. Asp-621 functions as the Proton acceptor in the catalytic mechanism. The DGA/G signature appears at 621–623 (DGG). Residue Lys-730 is modified to N6-succinyllysine.

Expressed in myocardium (at protein level).

Its subcellular location is the endoplasmic reticulum membrane. It is found in the mitochondrion membrane. The protein resides in the peroxisome membrane. The enzyme catalyses a 1,2-diacyl-sn-glycero-3-phosphocholine + H2O = a 1-acyl-sn-glycero-3-phosphocholine + a fatty acid + H(+). The catalysed reaction is a 1,2-diacyl-sn-glycero-3-phosphocholine + H2O = a 2-acyl-sn-glycero-3-phosphocholine + a fatty acid + H(+). It carries out the reaction a 1,2-diacyl-sn-glycero-3-phosphoethanolamine + H2O = a 1-acyl-sn-glycero-3-phosphoethanolamine + a fatty acid + H(+). It catalyses the reaction a 1-O-(1Z-alkenyl)-2-acyl-sn-glycero-3-phosphocholine + H2O = a 1-O-(1Z-alkenyl)-sn-glycero-3-phosphocholine + a fatty acid + H(+). The enzyme catalyses a 1-acyl-sn-glycero-3-phosphocholine + H2O = sn-glycerol 3-phosphocholine + a fatty acid + H(+). The catalysed reaction is 1-hexadecanoyl-2-(5Z,8Z,11Z,14Z-eicosatetraenoyl)-sn-glycero-3-phosphocholine + H2O = 2-(5Z,8Z,11Z,14Z)-eicosatetraenoyl-sn-glycero-3-phosphocholine + hexadecanoate + H(+). It carries out the reaction 1-acyl-2-(9Z,12Z)-octadecadienoyl-sn-glycero-3-phosphocholine + H2O = a 1-acyl-sn-glycero-3-phosphocholine + (9Z,12Z)-octadecadienoate + H(+). It catalyses the reaction 1-acyl-2-(5Z,8Z,11Z,14Z-eicosatetraenoyl)-sn-glycero-3-phosphocholine + H2O = a 1-acyl-sn-glycero-3-phosphocholine + (5Z,8Z,11Z,14Z)-eicosatetraenoate + H(+). The enzyme catalyses 1-hexadecanoyl-2-(5Z,8Z,11Z,14Z-eicosatetraenoyl)-sn-glycero-3-phosphocholine + H2O = 1-hexadecanoyl-sn-glycero-3-phosphocholine + (5Z,8Z,11Z,14Z)-eicosatetraenoate + H(+). The catalysed reaction is 1-octadecanoyl-2-(9Z-octadecenoyl)-sn-glycero-3-phosphocholine + H2O = 1-octadecanoyl-sn-glycero-3-phosphocholine + (9Z)-octadecenoate + H(+). It carries out the reaction 1-hexadecanoyl-2-(9Z-octadecenoyl)-sn-glycero-3-phosphocholine + H2O = 1-hexadecanoyl-sn-glycero-3-phosphocholine + (9Z)-octadecenoate + H(+). It catalyses the reaction 1-hexadecanoyl-2-(9Z,12Z-octadecadienoyl)-sn-glycero-3-phosphocholine + H2O = (9Z,12Z)-octadecadienoate + 1-hexadecanoyl-sn-glycero-3-phosphocholine + H(+). The enzyme catalyses 1-acyl-2-(9Z,12Z)-octadecadienoyl-sn-glycero-3-phosphoethanolamine + H2O = a 1-acyl-sn-glycero-3-phosphoethanolamine + (9Z,12Z)-octadecadienoate + H(+). The catalysed reaction is 1-acyl-2-(5Z,8Z,11Z,14Z)-eicosatetraenoyl-sn-glycero-3-phosphoethanolamine + H2O = a 1-acyl-sn-glycero-3-phosphoethanolamine + (5Z,8Z,11Z,14Z)-eicosatetraenoate + H(+). It carries out the reaction 1-hexadecanoyl-2-(5Z,8Z,11Z,14Z-eicosatetraenoyl)-sn-glycero-3-phosphoethanolamine + H2O = 1-hexadecanoyl-sn-glycero-3-phosphoethanolamine + (5Z,8Z,11Z,14Z)-eicosatetraenoate + H(+). It catalyses the reaction 1-octadecanoyl-2-(9Z-octadecenoyl)-sn-glycero-3-phosphocholine + H2O = 2-(9Z-octadecenoyl)-sn-glycero-3-phosphocholine + octadecanoate + H(+). The enzyme catalyses 1-hexadecanoyl-2-(4Z,7Z,10Z,13Z,16Z,19Z-docosahexaenoyl)-sn-glycero-3-phosphocholine + H2O = 2-(4Z,7Z,10Z,13Z,16Z,19Z-docosahexaenoyl)-sn-glycero-3-phosphocholine + hexadecanoate + H(+). The catalysed reaction is 1-O-(1Z)-hexadecenyl-2 (5Z,8Z,11Z,14Z)-eicosatetraenoyl-sn-glycero-3-phosphocholine + H2O = 1-(1Z-hexadecenyl)-sn-glycero-3-phosphocholine + (5Z,8Z,11Z,14Z)-eicosatetraenoate + H(+). It carries out the reaction 1-O-(1Z-hexadecenyl)-2-(9Z-octadecenoyl)-sn-glycero-3-phosphocholine + H2O = 1-(1Z-hexadecenyl)-sn-glycero-3-phosphocholine + (9Z)-octadecenoate + H(+). It catalyses the reaction 1-hexadecanoyl-sn-glycero-3-phosphocholine + H2O = sn-glycerol 3-phosphocholine + hexadecanoate + H(+). The enzyme catalyses 1',3'-bis-[1,2-di-(9Z,12Z-octadecadienoyl)-sn-glycero-3-phospho]-glycerol + H2O = 1'-[1,2-di-(9Z,12Z-octadecadienoyl)-sn-glycero-3-phospho]-3'-[1-(9Z,12Z-octadecadienoyl)-sn-glycero-3-phospho]-glycerol + (9Z,12Z)-octadecadienoate + H(+). The catalysed reaction is 1'-[1-acyl-2-(9-hydroxy-(10E,12Z)-octadecadienoyl)-sn-glycero-3-phospho]-3'-[1,2-diacyl-sn-glycero-3-phospho]-glycerol + H2O = 9-hydroxy-(10E,12Z)-octadecadienoate + 1'-[1,2-diacyl-sn-glycero-3-phospho],3'-[1-acyl-sn-glycero-3-phospho]-glycerol + H(+). Its pathway is phospholipid metabolism. Calcium-independent phospholipase. In terms of biological role, calcium-independent and membrane-bound phospholipase, that catalyzes the esterolytic cleavage of fatty acids from glycerophospholipids to yield free fatty acids and lysophospholipids, hence regulating membrane physical properties and the release of lipid second messengers and growth factors. Hydrolyzes phosphatidylethanolamine, phosphatidylcholine and probably phosphatidylinositol with a possible preference for the former. Also has a broad substrate specificity in terms of fatty acid moieties, hydrolyzing saturated and mono-unsaturated fatty acids at nearly equal rates from either the sn-1 or sn-2 position in diacyl phosphatidylcholine. However, has a weak activity toward polyunsaturated fatty acids at the sn-2 position, and thereby favors the production of 2-arachidonoyl lysophosphatidylcholine, a key branch point metabolite in eicosanoid signaling. On the other hand, can produce arachidonic acid from the sn-1 position of diacyl phospholipid and from the sn-2 position of arachidonate-containing plasmalogen substrates. Therefore, plays an important role in the mobilization of arachidonic acid in response to cellular stimuli and the generation of lipid second messengers. Can also hydrolyze lysophosphatidylcholine. In the mitochondrial compartment, catalyzes the hydrolysis and release of oxidized aliphatic chains from cardiolipin and integrates mitochondrial bioenergetics and signaling. It is essential for maintaining efficient bioenergetic mitochondrial function through tailoring mitochondrial membrane lipid metabolism and composition. The polypeptide is Calcium-independent phospholipase A2-gamma (Mus musculus (Mouse)).